The chain runs to 472 residues: Bifunctional protein HldE (472 aa).

The tract at residues 1-315 is ribokinase; that stretch reads MAKRVKILVV…QLLNSSFGAN (315 aa). 192–195 contacts ATP; it reads NKKE. Residue D260 is part of the active site. Residues 340-472 form a cytidylyltransferase region; the sequence is FTNGCFDILH…IKDAKNDDKK (133 aa).

In the N-terminal section; belongs to the carbohydrate kinase PfkB family. The protein in the C-terminal section; belongs to the cytidylyltransferase family. Homodimer.

The enzyme catalyses D-glycero-beta-D-manno-heptose 7-phosphate + ATP = D-glycero-beta-D-manno-heptose 1,7-bisphosphate + ADP + H(+). It catalyses the reaction D-glycero-beta-D-manno-heptose 1-phosphate + ATP + H(+) = ADP-D-glycero-beta-D-manno-heptose + diphosphate. It participates in nucleotide-sugar biosynthesis; ADP-L-glycero-beta-D-manno-heptose biosynthesis; ADP-L-glycero-beta-D-manno-heptose from D-glycero-beta-D-manno-heptose 7-phosphate: step 1/4. The protein operates within nucleotide-sugar biosynthesis; ADP-L-glycero-beta-D-manno-heptose biosynthesis; ADP-L-glycero-beta-D-manno-heptose from D-glycero-beta-D-manno-heptose 7-phosphate: step 3/4. Catalyzes the phosphorylation of D-glycero-D-manno-heptose 7-phosphate at the C-1 position to selectively form D-glycero-beta-D-manno-heptose-1,7-bisphosphate. Its function is as follows. Catalyzes the ADP transfer from ATP to D-glycero-beta-D-manno-heptose 1-phosphate, yielding ADP-D-glycero-beta-D-manno-heptose. In Campylobacter concisus (strain 13826), this protein is Bifunctional protein HldE.